The primary structure comprises 522 residues: Neutral amino acid uniporter 4 (522 aa).

A run of 10 helical transmembrane segments spans residues 115–135 (AGVL…IHCM), 181–201 (LVDW…FVFL), 226–246 (SLDL…LVFI), 255–275 (LSFF…QYVI), 293–313 (YPLF…VLPL), 329–349 (IGMA…YFCF), 377–397 (FGIY…ILPA), 409–429 (LCEF…AVLI), 435–455 (VISF…PPLV), and 467–487 (PWVI…FIAG). N-linked (GlcNAc...) asparagine glycosylation occurs at asparagine 515.

Belongs to the amino acid/polyamine transporter 2 family.

It is found in the lysosome membrane. The catalysed reaction is L-tryptophan(in) = L-tryptophan(out). It carries out the reaction L-alanine(in) = L-alanine(out). The enzyme catalyses L-proline(in) = L-proline(out). In terms of biological role, uniporter that mediates the transport of neutral amino acids like L-tryptophan, proline and alanine. The transport activity is sodium ions-independent, electroneutral and therefore functions via facilitated diffusion. This is Neutral amino acid uniporter 4 from Xenopus laevis (African clawed frog).